The chain runs to 65 residues: Light-harvesting protein B800/830/1020 alpha-2 chain (65 aa).

The Cytoplasmic segment spans residues 1–13 (MWKLWKFVDFRMT). A helical membrane pass occupies residues 14–34 (AVGFHIFFALIAFAVHFACIS). His29 is a binding site for a bacteriochlorophyll. Residues 35–65 (SERFNWLEGAPAAEYYMDENPGIWKRTSYDG) are Periplasmic-facing.

Belongs to the antenna complex alpha subunit family. In terms of assembly, the core complex is formed by different alpha and beta chains, binding bacteriochlorophyll molecules, and arranged most probably in tetrameric structures disposed around the reaction center. The non-pigmented gamma chains may constitute additional components.

It localises to the cell inner membrane. Functionally, antenna complexes are light-harvesting systems, which transfer the excitation energy to the reaction centers. This chain is Light-harvesting protein B800/830/1020 alpha-2 chain, found in Halorhodospira halochloris (Ectothiorhodospira halochloris).